The primary structure comprises 111 residues: Large ribosomal subunit protein uL22 (111 aa).

Belongs to the universal ribosomal protein uL22 family. In terms of assembly, part of the 50S ribosomal subunit.

This protein binds specifically to 23S rRNA; its binding is stimulated by other ribosomal proteins, e.g. L4, L17, and L20. It is important during the early stages of 50S assembly. It makes multiple contacts with different domains of the 23S rRNA in the assembled 50S subunit and ribosome. Its function is as follows. The globular domain of the protein is located near the polypeptide exit tunnel on the outside of the subunit, while an extended beta-hairpin is found that lines the wall of the exit tunnel in the center of the 70S ribosome. The sequence is that of Large ribosomal subunit protein uL22 from Protochlamydia amoebophila (strain UWE25).